Here is a 213-residue protein sequence, read N- to C-terminus: 2-dehydro-3-deoxy-phosphogluconate aldolase (213 aa).

E45 acts as the Proton acceptor in catalysis. R49, T73, and K133 together coordinate pyruvate. The active-site Schiff-base intermediate with substrate is K133.

Belongs to the KHG/KDPG aldolase family. As to quaternary structure, homotrimer.

It localises to the cytoplasm. The enzyme catalyses 2-dehydro-3-deoxy-6-phospho-D-gluconate = D-glyceraldehyde 3-phosphate + pyruvate. Its pathway is carbohydrate acid metabolism; 2-dehydro-3-deoxy-D-gluconate degradation; D-glyceraldehyde 3-phosphate and pyruvate from 2-dehydro-3-deoxy-D-gluconate: step 2/2. Involved in the degradation of glucose via the Entner-Doudoroff pathway. Catalyzes the reversible, stereospecific retro-aldol cleavage of 2-keto-3-deoxy-6-phosphogluconate (KDPG) to pyruvate and D-glyceraldehyde-3-phosphate. This is 2-dehydro-3-deoxy-phosphogluconate aldolase (eda) from Dickeya dadantii (strain 3937) (Erwinia chrysanthemi (strain 3937)).